Here is a 447-residue protein sequence, read N- to C-terminus: Probable glycine dehydrogenase (decarboxylating) subunit 1 (447 aa).

It belongs to the GcvP family. N-terminal subunit subfamily. The glycine cleavage system is composed of four proteins: P, T, L and H. In this organism, the P 'protein' is a heterodimer of two subunits.

The enzyme catalyses N(6)-[(R)-lipoyl]-L-lysyl-[glycine-cleavage complex H protein] + glycine + H(+) = N(6)-[(R)-S(8)-aminomethyldihydrolipoyl]-L-lysyl-[glycine-cleavage complex H protein] + CO2. The glycine cleavage system catalyzes the degradation of glycine. The P protein binds the alpha-amino group of glycine through its pyridoxal phosphate cofactor; CO(2) is released and the remaining methylamine moiety is then transferred to the lipoamide cofactor of the H protein. This chain is Probable glycine dehydrogenase (decarboxylating) subunit 1, found in Bacillus cereus (strain AH187).